We begin with the raw amino-acid sequence, 115 residues long: Methylmalonyl-CoA decarboxylase subunit delta (115 aa).

The helical transmembrane segment at 11–31 (WLIMAINMTVVFAVLIALGIL) threads the bilayer. The tract at residues 46–70 (EAPAATAPVATPTATPVAPANASAQ) is disordered. Residues 48–65 (PAATAPVATPTATPVAPA) are compositionally biased toward low complexity.

The protein belongs to the OadG family. The methylmalonyl-CoA decarboxylase is composed of five subunits: the carboxyltransferase alpha subunit (MmdA), the tunnel beta subunit (MmdB), the biotin-containing gamma subunit (MmdC), and the delta (MmdD) and epsilon (MmdE) subunits. The N-terminus is blocked.

It localises to the cell membrane. The enzyme catalyses (S)-methylmalonyl-CoA + Na(+)(in) + H(+)(out) = propanoyl-CoA + Na(+)(out) + CO2. With respect to regulation, completely inhibited by avidin. Its function is as follows. Subunit of the sodium ion pump methylmalonyl-CoA decarboxylase, which converts the chemical energy of a decarboxylation reaction into an electrochemical gradient of Na(+) ions across the cytoplasmic membrane, thereby creating a sodium ion motive force that is used for ATP synthesis. The delta subunit is required for catalytic activity as well as for the proper assembly of the individual subunits to an enzyme complex. Can also convert malonyl-CoA into acetyl-CoA. The sequence is that of Methylmalonyl-CoA decarboxylase subunit delta from Veillonella parvula (Staphylococcus parvulus).